Reading from the N-terminus, the 465-residue chain is Nucleolar and spindle-associated protein 1 (465 aa).

Positions 32–61 (ADKLLRALKAHLKNEARKENENQDEIQTSA) form a coiled coil. 3 disordered regions span residues 44–123 (KNEA…QNHS), 148–207 (VEVP…TPNF), and 252–294 (GVPA…GSAK). The span at 56-75 (EIQTSASSCDEPEIQTSSQE) shows a compositional bias: polar residues. Residues 76–86 (QAEREPDDHVT) are compositionally biased toward basic and acidic residues. The segment covering 87 to 96 (KTRGRRKTVH) has biased composition (basic residues). A Phosphoserine modification is found at S152. Over residues 154–166 (PNESQGDENTVSS) the composition is skewed to polar residues. Residues 169–179 (HGIDGNEDPRV) show a composition bias toward basic and acidic residues. T204 is subject to Phosphothreonine. The interval 262–405 (GRLSVACTPG…HKGKLKPWGQ (144 aa)) is interaction with microtubules. Position 265 is a phosphoserine (S265). T269 bears the Phosphothreonine mark. Phosphoserine is present on residues S272, S292, S299, and S334. The interval 308–338 (SAATKDNEHKRSLTKTPARKSPHVTTSVNTP) is disordered. 3 positions are modified to phosphothreonine: T337, T361, and T372. Residues S375 and S386 each carry the phosphoserine modification. The interval 396–454 (HKGKLKPWGQSKENNSLHEHVNRVSFHKKTYKQPRLQTREEQRKKHERERKEKKEKVLG) is disordered. A KEN box motif is present at residues 407-413 (KENNSLH). Residues 430–457 (RLQTREEQRKKHERERKEKKEKVLGVRR) adopt a coiled-coil conformation. Over residues 432-453 (QTREEQRKKHERERKEKKEKVL) the composition is skewed to basic and acidic residues.

It belongs to the NUSAP family. As to quaternary structure, interacts with DNA and microtubules. Microtubule bundling is inhibited by IPO7, KPNA2 and KPNB1 while association with DNA is also inhibited by IPO7 and KPNA2. Post-translationally, ubiquitinated. Ubiquitination by FZR1 may lead to proteasome-dependent degradation of this protein.

Its subcellular location is the cytoplasm. The protein resides in the nucleus. It is found in the nucleolus. The protein localises to the cytoskeleton. It localises to the spindle. Its subcellular location is the chromosome. Functionally, microtubule-associated protein with the capacity to bundle and stabilize microtubules. May associate with chromosomes and promote the organization of mitotic spindle microtubules around them. The sequence is that of Nucleolar and spindle-associated protein 1 (NUSAP1) from Bos taurus (Bovine).